Here is a 407-residue protein sequence, read N- to C-terminus: Shaggy-related protein kinase iota (407 aa).

A compositionally biased stretch (low complexity) spans Met-1–Leu-19. Positions Met-1–Asp-23 are disordered. N-acetylalanine is present on Ala-2. Residues Tyr-70–Phe-354 enclose the Protein kinase domain. Residues Val-76–Val-84 and Lys-99 each bind ATP. Asp-195 serves as the catalytic Proton acceptor. Residue Tyr-230 is modified to Phosphotyrosine.

Belongs to the protein kinase superfamily. CMGC Ser/Thr protein kinase family. GSK-3 subfamily. In terms of assembly, binds to KIB1. Interacts with BSK6. Post-translationally, autophosphorylated mainly on threonine and serine residues.

The enzyme catalyses L-seryl-[protein] + ATP = O-phospho-L-seryl-[protein] + ADP + H(+). It catalyses the reaction L-threonyl-[protein] + ATP = O-phospho-L-threonyl-[protein] + ADP + H(+). Its function is as follows. Phosphorylates BSK1, BSK3, BSK5, BSK6, BSK8 and BSK11 in vitro. May mediate extracellular signals to regulate transcription in differentiating cells. In Arabidopsis thaliana (Mouse-ear cress), this protein is Shaggy-related protein kinase iota (ASK9).